The sequence spans 264 residues: Regulatory protein RecX (264 aa).

Belongs to the RecX family.

It localises to the cytoplasm. In terms of biological role, modulates RecA activity. This is Regulatory protein RecX from Lacticaseibacillus casei (strain BL23) (Lactobacillus casei).